Reading from the N-terminus, the 428-residue chain is Putative zinc metalloprotease SAR1238 (428 aa).

Residue histidine 21 participates in Zn(2+) binding. Glutamate 22 is an active-site residue. A Zn(2+)-binding site is contributed by histidine 25. Helical transmembrane passes span 172 to 194 (FLTLFAGPLFNFILALVLFIGLA), 309 to 331 (GSTYIFSAVVGMLASIFTGGFSF), 352 to 374 (IISLIGYTALLSVNLGIMNLIPI), and 401 to 420 (TTIIAIGAIFMVVIMILVTW). The PDZ domain occupies 186–269 (ALVLFIGLAY…TKSVELTPKK (84 aa)).

This sequence belongs to the peptidase M50B family. Zn(2+) is required as a cofactor.

It is found in the cell membrane. The sequence is that of Putative zinc metalloprotease SAR1238 from Staphylococcus aureus (strain MRSA252).